The chain runs to 226 residues: Eukaryotic translation initiation factor 3 subunit K (226 aa).

Residues 42–200 (YNLDANLSLL…QLIVLPRNEF (159 aa)) form the PCI domain.

Belongs to the eIF-3 subunit K family. In terms of assembly, component of the eukaryotic translation initiation factor 3 (eIF-3) complex.

The protein resides in the cytoplasm. Component of the eukaryotic translation initiation factor 3 (eIF-3) complex, which is involved in protein synthesis of a specialized repertoire of mRNAs and, together with other initiation factors, stimulates binding of mRNA and methionyl-tRNAi to the 40S ribosome. The eIF-3 complex specifically targets and initiates translation of a subset of mRNAs involved in cell proliferation. This is Eukaryotic translation initiation factor 3 subunit K (TIF3K1) from Oryza sativa subsp. japonica (Rice).